Here is a 282-residue protein sequence, read N- to C-terminus: MNAPIVRPLAELRSMVRGWKSRGETIGVVPTMGALHEGHLSLVRAARASCDRVIVTLFVNPRQFNNTEDYAKYPRTEHTDAALLAPLGVDALFVPDGDEVYPPDHATVISVSGVTAPLEGAHRPGHFDGVATVVTLLFNMTGADRAFFGEKDWQQLQLVRRLVQDLKLPVEIVPCPCVRAEDGLALSSRNQRLTAEGRTRAAALPRTLFEAARRIEAGAPTAEALAAAQEGLEAAGIGPVEYLELRDGETLGEPQLGRPARLLVAAWLDGVRLIDNVAVTLR.

32–39 (MGALHEGH) contacts ATP. H39 acts as the Proton donor in catalysis. Q63 lines the (R)-pantoate pocket. Beta-alanine is bound at residue Q63. Position 149-152 (149-152 (GEKD)) interacts with ATP. Q155 serves as a coordination point for (R)-pantoate. Residues V178 and 186 to 189 (LSSR) contribute to the ATP site.

The protein belongs to the pantothenate synthetase family. In terms of assembly, homodimer.

It localises to the cytoplasm. The enzyme catalyses (R)-pantoate + beta-alanine + ATP = (R)-pantothenate + AMP + diphosphate + H(+). It functions in the pathway cofactor biosynthesis; (R)-pantothenate biosynthesis; (R)-pantothenate from (R)-pantoate and beta-alanine: step 1/1. Its function is as follows. Catalyzes the condensation of pantoate with beta-alanine in an ATP-dependent reaction via a pantoyl-adenylate intermediate. In Paracoccus denitrificans (strain Pd 1222), this protein is Pantothenate synthetase.